Reading from the N-terminus, the 453-residue chain is Bifunctional protein GlmU (453 aa).

The pyrophosphorylase stretch occupies residues 1-226 (MSFSAVILAA…PIEVEGVNNR (226 aa)). UDP-N-acetyl-alpha-D-glucosamine contacts are provided by residues 8-11 (LAAG), Lys22, Gln73, 78-79 (GT), 100-102 (YGD), Gly137, Glu151, Asn166, and Asn224. Residue Asp102 participates in Mg(2+) binding. Asn224 is a binding site for Mg(2+). The segment at 227 to 247 (IQLARLERAYQAMQAERLLEQ) is linker. The tract at residues 248 to 453 (GVMLRDPSRF…KGWKRPVKQK (206 aa)) is N-acetyltransferase. 2 residues coordinate UDP-N-acetyl-alpha-D-glucosamine: Arg330 and Lys348. His360 serves as the catalytic Proton acceptor. UDP-N-acetyl-alpha-D-glucosamine contacts are provided by Tyr363 and Asn374. Acetyl-CoA-binding positions include Ala377, 383–384 (NY), Ser402, Ala420, and Arg437.

This sequence in the N-terminal section; belongs to the N-acetylglucosamine-1-phosphate uridyltransferase family. It in the C-terminal section; belongs to the transferase hexapeptide repeat family. As to quaternary structure, homotrimer. Mg(2+) is required as a cofactor.

It localises to the cytoplasm. The catalysed reaction is alpha-D-glucosamine 1-phosphate + acetyl-CoA = N-acetyl-alpha-D-glucosamine 1-phosphate + CoA + H(+). It carries out the reaction N-acetyl-alpha-D-glucosamine 1-phosphate + UTP + H(+) = UDP-N-acetyl-alpha-D-glucosamine + diphosphate. It participates in nucleotide-sugar biosynthesis; UDP-N-acetyl-alpha-D-glucosamine biosynthesis; N-acetyl-alpha-D-glucosamine 1-phosphate from alpha-D-glucosamine 6-phosphate (route II): step 2/2. Its pathway is nucleotide-sugar biosynthesis; UDP-N-acetyl-alpha-D-glucosamine biosynthesis; UDP-N-acetyl-alpha-D-glucosamine from N-acetyl-alpha-D-glucosamine 1-phosphate: step 1/1. It functions in the pathway bacterial outer membrane biogenesis; LPS lipid A biosynthesis. Catalyzes the last two sequential reactions in the de novo biosynthetic pathway for UDP-N-acetylglucosamine (UDP-GlcNAc). The C-terminal domain catalyzes the transfer of acetyl group from acetyl coenzyme A to glucosamine-1-phosphate (GlcN-1-P) to produce N-acetylglucosamine-1-phosphate (GlcNAc-1-P), which is converted into UDP-GlcNAc by the transfer of uridine 5-monophosphate (from uridine 5-triphosphate), a reaction catalyzed by the N-terminal domain. The sequence is that of Bifunctional protein GlmU from Photobacterium profundum (strain SS9).